The following is a 76-amino-acid chain: uncharacterized protein (76 aa).

Residues 53 to 70 traverse the membrane as a helical segment; the sequence is STKLHIIWFCIFAIFIAV.

The protein resides in the membrane. This is an uncharacterized protein from Haemophilus influenzae (strain ATCC 51907 / DSM 11121 / KW20 / Rd).